A 461-amino-acid polypeptide reads, in one-letter code: Steroidogenic factor 1 (461 aa).

The nuclear receptor DNA-binding region spans 10 to 85 (DELCPVCGDK…VGMRLEAVRA (76 aa)). The segment at 13-33 (CPVCGDKVSGYHYGLLTCESC) adopts an NR C4-type zinc-finger fold. N6-acetyllysine is present on residues Lys34, Lys38, and Lys72. Residues 49–73 (CTESQSCKIDKTLRKRCPFCRFQKC) form an NR C4-type zinc finger. A Glycyl lysine isopeptide (Lys-Gly) (interchain with G-Cter in SUMO) cross-link involves residue Lys119. A disordered region spans residues 119–153 (KLETGPPMGVPPPPPPPPDYMLPPGLHVPEPKGLA). The span at 126–139 (MGVPPPPPPPPDYM) shows a compositional bias: pro residues. A Glycyl lysine isopeptide (Lys-Gly) (interchain with G-Cter in SUMO) cross-link involves residue Lys194. Ser203 bears the Phosphoserine; by CDK7 mark. The 238-residue stretch at 222–459 (GVPELILQLL…NLLIEMLQAK (238 aa)) folds into the NR LBD domain. Positions 341, 436, and 440 each coordinate a 1,2-diacyl-sn-glycero-3-phosphocholine.

It belongs to the nuclear hormone receptor family. NR5 subfamily. Binds DNA as a monomer. Part of a complex consisting of SFPQ, NONO and NR5A1. Interacts with NR0B2. Interacts with DGKQ and CDK7. Binds to and activated by HIPK3. Acetylation stimulates the transcriptional activity. Post-translationally, sumoylation reduces CDK7-mediated phosphorylation on Ser-203. In terms of processing, phosphorylated on Ser-203 by CDK7. This phosphorylation promotes transcriptional activity.

It localises to the nucleus. Its function is as follows. Transcriptional activator. Seems to be essential for sexual differentiation and formation of the primary steroidogenic tissues. Binds to the Ad4 site found in the promoter region of steroidogenic P450 genes such as CYP11A, CYP11B and CYP21B. Also regulates the AMH/Muellerian inhibiting substance gene as well as the AHCH and STAR genes. 5'-YCAAGGYC-3' and 5'-RRAGGTCA-3' are the consensus sequences for the recognition by NR5A1. The SFPQ-NONO-NR5A1 complex binds to the CYP17 promoter and regulates basal and cAMP-dependent transcriptional activity. Binds phospholipids with a phosphatidylinositol (PI) headgroup, in particular PI(3,4)P2 and PI(3,4,5)P3. Activated by the phosphorylation of NR5A1 by HIPK3 leading to increased steroidogenic gene expression upon cAMP signaling pathway stimulation. The protein is Steroidogenic factor 1 (NR5A1) of Equus caballus (Horse).